The chain runs to 241 residues: Centromere protein H (241 aa).

The residue at position 1 (Met-1) is an N-acetylmethionine. The interval 1–24 is disordered; it reads MEEQPRERSEAGAEACEEKRGLSQ. A coiled-coil region spans residues 28–186; sequence ERIEDRISLL…KEDVDKMENS (159 aa). Lys-61 participates in a covalent cross-link: Glycyl lysine isopeptide (Lys-Gly) (interchain with G-Cter in SUMO2). Phosphothreonine is present on Thr-62.

The protein belongs to the CENP-H/MCM16 family. As to quaternary structure, self-associates. Component of the CENPA-NAC complex, at least composed of CENPA, CENPC, CENPH, CENPM, CENPN, CENPT and CENPU. The CENPA-NAC complex interacts with the CENPA-CAD complex, composed of CENPI, CENPK, CENPL, CENPO, CENPP, CENPQ, CENPR and CENPS. Interacts directly with CENPK. Interacts with KIF2C and NDC80. Interacts with TRIM36. In terms of tissue distribution, abundantly expressed in thymus, spleen, uterus, ovary, testis and muscle, and weakly expressed in small intestine, lung and stomach. Barely detectable expression in kidney, liver, skin and prostate gland. Not detected in brain, heart or adrenal gland. Also expressed weakly in various hematopoietic cell lines.

It localises to the nucleus. The protein resides in the chromosome. Its subcellular location is the centromere. The protein localises to the kinetochore. Its function is as follows. Component of the CENPA-NAC (nucleosome-associated) complex, a complex that plays a central role in assembly of kinetochore proteins, mitotic progression and chromosome segregation. The CENPA-NAC complex recruits the CENPA-CAD (nucleosome distal) complex and may be involved in incorporation of newly synthesized CENPA into centromeres. Required for chromosome congression and efficiently align the chromosomes on a metaphase plate. This is Centromere protein H from Mus musculus (Mouse).